We begin with the raw amino-acid sequence, 30 residues long: Protein ScvA (30 aa).

The interval 1-30 (MERQNVQQQRGKDQRPQRPGASNPRRPNQR) is disordered.

Might be involved in DNA-binding; the protein binds DNA in gel-shift assays and immunogold electron microscopy shows labelling of condensed chromatin. The protein is Protein ScvA (scvA) of Coxiella burnetii (strain RSA 493 / Nine Mile phase I).